The sequence spans 86 residues: V-type proton ATPase subunit e (86 aa).

The chain crosses the membrane as a helical span at residues methionine 1 to glycine 21. At proline 22–glycine 32 the chain is on the cytoplasmic side. Residues isoleucine 33–phenylalanine 53 form a helical membrane-spanning segment. The Lumenal portion of the chain corresponds to leucine 54–asparagine 86.

The protein belongs to the V-ATPase e1/e2 subunit family. As to quaternary structure, V-ATPase is a heteromultimeric enzyme made up of two complexes: the ATP-hydrolytic V1 complex and the proton translocation V0 complex. The V1 complex consists of three catalytic AB heterodimers that form a heterohexamer, three peripheral stalks each consisting of EG heterodimers, one central rotor including subunits D and F, and the regulatory subunits C and H. The proton translocation complex V0 consists of the proton transport subunit a, a ring of proteolipid subunits c9c'', rotary subunit d, subunits e and f, and the accessory subunits vah-19/Ac45 and vah-20/PRR.

It is found in the apical cell membrane. Its function is as follows. Subunit of the V0 complex of vacuolar(H+)-ATPase (V-ATPase), a multisubunit enzyme composed of a peripheral complex (V1) that hydrolyzes ATP and a membrane integral complex (V0) that translocates protons. V-ATPase is responsible for acidifying and maintaining the pH of intracellular compartments and in some cell types, is targeted to the plasma membrane, where it is responsible for acidifying the extracellular environment. During embryonic development, the V-ATPase is required to repress fusion of epidermal cells probably by negatively regulating eff-1-mediated cell fusion. The protein is V-type proton ATPase subunit e of Caenorhabditis elegans.